Reading from the N-terminus, the 347-residue chain is tRNA N6-adenosine threonylcarbamoyltransferase (347 aa).

The Fe cation site is built by His-117 and His-121. Substrate-binding positions include 140-144 (LVSGG), Asp-174, Gly-187, Asp-191, and Asn-281. Position 309 (Asp-309) interacts with Fe cation.

This sequence belongs to the KAE1 / TsaD family. Fe(2+) is required as a cofactor.

The protein localises to the cytoplasm. The catalysed reaction is L-threonylcarbamoyladenylate + adenosine(37) in tRNA = N(6)-L-threonylcarbamoyladenosine(37) in tRNA + AMP + H(+). Functionally, required for the formation of a threonylcarbamoyl group on adenosine at position 37 (t(6)A37) in tRNAs that read codons beginning with adenine. Is involved in the transfer of the threonylcarbamoyl moiety of threonylcarbamoyl-AMP (TC-AMP) to the N6 group of A37, together with TsaE and TsaB. TsaD likely plays a direct catalytic role in this reaction. This chain is tRNA N6-adenosine threonylcarbamoyltransferase, found in Thermobifida fusca (strain YX).